A 233-amino-acid chain; its full sequence is NAD(P)H-hydrate epimerase (233 aa).

The YjeF N-terminal domain occupies serine 15–valine 218. Position 67 to 71 (asparagine 67 to aspartate 71) interacts with (6S)-NADPHX. Residues asparagine 68 and aspartate 128 each contribute to the K(+) site. (6S)-NADPHX is bound by residues glycine 132–proline 138, tyrosine 143, and aspartate 161. Serine 164 lines the K(+) pocket.

This sequence belongs to the NnrE/AIBP family. K(+) serves as cofactor.

It catalyses the reaction (6R)-NADHX = (6S)-NADHX. The enzyme catalyses (6R)-NADPHX = (6S)-NADPHX. Its function is as follows. Catalyzes the epimerization of the S- and R-forms of NAD(P)HX, a damaged form of NAD(P)H that is a result of enzymatic or heat-dependent hydration. This is a prerequisite for the S-specific NAD(P)H-hydrate dehydratase to allow the repair of both epimers of NAD(P)HX. In Paramecium tetraurelia, this protein is NAD(P)H-hydrate epimerase.